We begin with the raw amino-acid sequence, 45 residues long: Non-structural protein of 4.8 kDa (45 aa).

This sequence belongs to the coronaviruses ns4/ns4.8 protein family.

This chain is Non-structural protein of 4.8 kDa, found in Bovine coronavirus (strain OK-0514) (BCoV).